A 286-amino-acid chain; its full sequence is Movement protein (286 aa).

Belongs to the tenuiviruses pc4 protein family. As to quaternary structure, interacts with the rice proteins DJA6 and HSP17.9A.

Its subcellular location is the host cytoplasm. Functionally, transports viral genome to neighboring plant cells directly through plasmosdesmata, without any budding. The movement protein allows efficient cell to cell propagation, by bypassing the host cell wall barrier. This is Movement protein from Avena sativa (Oat).